A 205-amino-acid chain; its full sequence is Urease accessory protein UreE (205 aa).

A compositionally biased stretch (basic residues) spans 178 to 196 (AHFHAGGHGHVHSGHGHGG). Residues 178–205 (AHFHAGGHGHVHSGHGHGGKHGEHDAES) form a disordered region.

The protein belongs to the UreE family.

It is found in the cytoplasm. In terms of biological role, involved in urease metallocenter assembly. Binds nickel. Probably functions as a nickel donor during metallocenter assembly. This is Urease accessory protein UreE from Bordetella pertussis (strain Tohama I / ATCC BAA-589 / NCTC 13251).